A 569-amino-acid chain; its full sequence is Urease subunit beta (569 aa).

Residues 131 to 569 enclose the Urease domain; the sequence is GGIDTHIHFI…VSLGQLYCLF (439 aa). Residues His-136, His-138, and Lys-219 each contribute to the Ni(2+) site. Lys-219 is subject to N6-carboxylysine. His-221 serves as a coordination point for substrate. Ni(2+) is bound by residues His-248 and His-274. His-322 acts as the Proton donor in catalysis. Asp-362 contributes to the Ni(2+) binding site.

Belongs to the metallo-dependent hydrolases superfamily. Urease alpha subunit family. Heterohexamer of 3 UreA (alpha) and 3 UreB (beta) subunits. Ni cation is required as a cofactor. Carboxylation allows a single lysine to coordinate two nickel ions.

It is found in the cytoplasm. The enzyme catalyses urea + 2 H2O + H(+) = hydrogencarbonate + 2 NH4(+). Its pathway is nitrogen metabolism; urea degradation; CO(2) and NH(3) from urea (urease route): step 1/1. This is Urease subunit beta from Helicobacter hepaticus (strain ATCC 51449 / 3B1).